Here is a 728-residue protein sequence, read N- to C-terminus: Hepatocyte growth factor (728 aa).

The N-terminal stretch at Met1–Gly32 is a signal peptide. Gln33 is modified (pyrrolidone carboxylic acid). One can recognise a PAN domain in the interval Asn38–Asp124. Disulfide bonds link Cys71/Cys97, Cys75/Cys85, Cys129/Cys207, Cys150/Cys190, Cys178/Cys202, Cys212/Cys289, Cys233/Cys272, and Cys261/Cys284. 2 consecutive Kringle domains span residues Cys129–Cys207 and Cys212–Cys289. N-linked (GlcNAc...) asparagine glycosylation occurs at Asn295. 11 cysteine pairs are disulfide-bonded: Cys306-Cys384, Cys327-Cys366, Cys355-Cys378, Cys392-Cys470, Cys413-Cys453, Cys441-Cys465, Cys488-Cys607, Cys520-Cys536, Cys615-Cys682, Cys645-Cys661, and Cys672-Cys700. Kringle domains lie at Cys306–Cys384 and Cys392–Cys470. N-linked (GlcNAc...) asparagine glycosylation is present at Asn403. The 229-residue stretch at Val496–Leu724 folds into the Peptidase S1 domain. 2 N-linked (GlcNAc...) asparagine glycosylation sites follow: Asn569 and Asn656.

It belongs to the peptidase S1 family. Plasminogen subfamily. As to quaternary structure, dimer of an alpha chain and a beta chain linked by a disulfide bond. Interacts with SRPX2; the interaction increases HGF mitogenic activity. Post-translationally, the single-chain precursor undergoes proteolytic processing by TMPRSS13 resulting in an active two-chain form. The single-chain precursor undergoes proteolytic processing by HGFAC resulting in an active two-chain form.

Potent mitogen for mature parenchymal hepatocyte cells, seems to be a hepatotrophic factor, and acts as a growth factor for a broad spectrum of tissues and cell types. Activating ligand for the receptor tyrosine kinase MET by binding to it and promoting its dimerization. Activates MAPK signaling following TMPRSS13 cleavage and activation. This Rattus norvegicus (Rat) protein is Hepatocyte growth factor (Hgf).